Here is a 128-residue protein sequence, read N- to C-terminus: 3-aminoacrylate deaminase RutC (128 aa).

The protein belongs to the RutC family. Homotrimer.

It catalyses the reaction (Z)-3-aminoacrylate + H2O + H(+) = 3-oxopropanoate + NH4(+). Functionally, involved in pyrimidine catabolism. Catalyzes the deamination of 3-aminoacrylate to malonic semialdehyde, a reaction that can also occur spontaneously. RutC may facilitate the reaction and modulate the metabolic fitness, rather than catalyzing essential functions. The sequence is that of 3-aminoacrylate deaminase RutC from Shigella flexneri serotype X (strain 2002017).